A 309-amino-acid chain; its full sequence is Homoserine O-succinyltransferase (309 aa).

Catalysis depends on C142, which acts as the Acyl-thioester intermediate. Residues K163 and S192 each contribute to the substrate site. H235 acts as the Proton acceptor in catalysis. E237 is an active-site residue. R249 serves as a coordination point for substrate.

The protein belongs to the MetA family. In terms of assembly, homodimer.

It localises to the cytoplasm. It catalyses the reaction L-homoserine + succinyl-CoA = O-succinyl-L-homoserine + CoA. It functions in the pathway amino-acid biosynthesis; L-methionine biosynthesis via de novo pathway; O-succinyl-L-homoserine from L-homoserine: step 1/1. Transfers a succinyl group from succinyl-CoA to L-homoserine, forming succinyl-L-homoserine. The sequence is that of Homoserine O-succinyltransferase from Escherichia fergusonii (strain ATCC 35469 / DSM 13698 / CCUG 18766 / IAM 14443 / JCM 21226 / LMG 7866 / NBRC 102419 / NCTC 12128 / CDC 0568-73).